The following is a 405-amino-acid chain: MSSVSQARSLGKYFLLMDNMLVVMGFYVVFPLISIRFVDQLGWAALLVGIALGLRQFIQQGLGIFGGAFADRLGAKPMIIAGMLMRALGFVLMGIADEPWLLWLSCALSALGGTLFDPPRTALVIKLTRPWERGRFYSLLMMQDSACSVIGALLGSWLLRYDFKLVCLAGAVLFVFAAIFNAWLLPGYRISTVRAPMLEGMRRVLRDQRFVTYVLTLTGYYMLSVQVMLMLPIRINEVAGQPAAVKWMYAIEAALSLSLLYPIARWSEKRFRLETRLMAGLTVMLLSLFPIGLIEDLRALFMLIGLFYIGSIIAEPARETLGASLADNRARGSYMGFSRLGLALGGAIGYSGGGWLYDVGNRLEIPQLPWFMLGLIGFITLLGLYRQFQQRPIEPAMLNGRGEGS.

A run of 12 helical transmembrane segments spans residues 13-33 (YFLL…FPLI), 34-54 (SIRF…ALGL), 78-95 (MIIA…LMGI), 99-116 (PWLL…GTLF), 139-159 (LLMM…SWLL), 165-185 (LVCL…AWLL), 213-233 (YVLT…MLPI), 243-263 (AAVK…LYPI), 277-297 (LMAG…IEDL), 299-319 (ALFM…PARE), 340-360 (LGLA…YDVG), and 365-385 (IPQL…LGLY).

Belongs to the major facilitator superfamily. DHA1 family. MdtH (TC 2.A.1.2.21) subfamily.

It is found in the cell inner membrane. The chain is Multidrug resistance protein MdtH from Sodalis glossinidius (strain morsitans).